The chain runs to 1021 residues: Solute carrier family 12 member 3 (1021 aa).

At 1 to 137 the chain is on the cytoplasmic side; sequence MAELPTTETP…KNPEEPVRFG (137 aa). At serine 43 the chain carries Phosphoserine. At threonine 46 the chain carries Phosphothreonine; by OXSR1 and STK39. A Phosphoserine modification is found at serine 49. At threonine 50 the chain carries Phosphothreonine. Phosphothreonine; by OXSR1 and STK39 is present on residues threonine 55 and threonine 60. Serine 73 is modified (phosphoserine). Phosphoserine; by OXSR1 and STK39 is present on serine 91. Threonine 124 is modified (phosphothreonine). Phosphoserine is present on serine 126. A discontinuously helical transmembrane segment spans residues 138-167; that stretch reads WVKGVMIRCMLNIWGVILYLRLPWITAQAG. Residue leucine 148 coordinates Na(+). Asparagine 149 provides a ligand contact to polythiazide. Tryptophan 151 contacts Na(+). Residues 168-189 traverse the membrane as a helical segment; sequence IVLTWIIILLSVTVTSITGLSI. Over 190-220 the chain is Cytoplasmic; sequence SAISTNGKVKSGGTYFLISRSLGPELGGSIG. The chain crosses the membrane as a helical span at residues 221 to 243; sequence LIFAFANAVGVAMHTVGFAETVR. Positions 227 and 234 each coordinate polythiazide. Topologically, residues 244–255 are extracellular; it reads DLLQEYGAPIVD. The next 2 membrane-spanning stretches (helical) occupy residues 256 to 280 and 281 to 303; these read PIND…AGME and WESK…YLVG. At 304–338 the chain is on the extracellular side; the sequence is TLIPPSEDKASKGFFSYRADIFVQNLVPDWRGPDG. A discontinuously helical transmembrane segment spans residues 339 to 360; sequence TFFGMFSIFFPSATGILAGANI. Threonine 352 is a binding site for polythiazide. Residues glycine 353, isoleucine 354, and leucine 355 each coordinate chloride. Polythiazide is bound at residue asparagine 359. Residues 361–371 are Cytoplasmic-facing; it reads SGDLKDPAIAI. A helical membrane pass occupies residues 372-393; the sequence is PKGTLMAIFWTTISYLAISATI. The Extracellular segment spans residues 394-453; sequence GSCVVRDASGVLNDTVTPGWGACEGLACSYGWNFTECTQQHSCHYGLINYYQTMSMVSGF. N-linked (GlcNAc...) asparagine glycosylation is present at asparagine 406. A disulfide bond links cysteine 416 and cysteine 421. Asparagine 426 carries an N-linked (GlcNAc...) asparagine glycan. A disulfide bridge links cysteine 430 with cysteine 436. Residues 454–477 traverse the membrane as a helical segment; the sequence is APLITAGIFGATLSSALACLVSAA. Alanine 464, serine 467, and serine 468 together coordinate Na(+). Residues 478–507 are Cytoplasmic-facing; the sequence is KVFQCLCEDQLYPLIGFFGKGYGKNKEPVR. The helical transmembrane segment at 508–522 threads the bilayer; sequence GYLLAYAIAVAFIII. Over 523–527 the chain is Extracellular; that stretch reads AELNT. The helical transmembrane segment at 528-544 threads the bilayer; that stretch reads IAPIISNFFLCSYALIN. Tyrosine 540 serves as a coordination point for chloride. The Cytoplasmic segment spans residues 545 to 567; the sequence is FSCFHASITNSPGWRPSFQYYNK. 2 helical membrane-spanning segments follow: residues 568–587 and 588–599; these read WAAL…LTWW and AALIAIGVVLFL. Residues 600-1021 lie on the Cytoplasmic side of the membrane; it reads LLYVIYKKPE…QENVLTFYCQ (422 aa). Residues 615-630 are scissor helix; sequence SVQAGSYNLALSYSVG. ATP contacts are provided by leucine 648, arginine 655, valine 677, glycine 741, leucine 780, and asparagine 781.

This sequence belongs to the SLC12A transporter family. Homodimer; adopts a domain-swap conformation at the scissor helices connecting the transmembrane domain and C-terminal domain. Interacts with KLHL3. Interacts with IL18R1; this interaction is increased by IL18 treatment. Ubiquitinated; ubiquitination is essential for regulation of endocytosis. The BCR(KLHL3) complex was initially identified as a candidate ubiquitin ligase for SLC12A3. However, it was later shown that it is not the case. Post-translationally, phosphorylated at Thr-46, Thr-55, Thr-60 and Ser-91 by OXSR1/OSR1 and STK39/SPAK downstream of WNK4, promoting its activity. Phosphorylated in response to IL18. Predominantly expressed in the kidney (at protein level). Localizes to the distal convoluted tubules (at protein level). Not detected in normal aorta, but abundantly expressed in fatty streaks and advanced atherosclerotic lesions (at protein level).

It localises to the cell membrane. Its subcellular location is the apical cell membrane. It carries out the reaction chloride(out) + Na(+)(out) = chloride(in) + Na(+)(in). Phosphorylation by OXSR1/OSR1 and STK39/SPAK in kidney distal convoluted tubules downstream of WNK4 promotes its activity. Also activated by OXSR1/OSR1 and STK39/SPAK downstream of WNK3. Target of thiazide diuretics used in the treatment of high blood pressure. Thiazide drugs, such as polythiazide, specifically inhibit SLC12A3/NCC transporter activity by competing with chloride for binding and by locking SLC12A3/NCC in an outward-facing conformation. In terms of biological role, electroneutral sodium and chloride ion cotransporter, which acts as a key mediator of sodium and chloride reabsorption in kidney distal convoluted tubules. Also acts as a receptor for the pro-inflammatory cytokine IL18, thereby contributing to IL18-induced cytokine production, including IFNG, IL6, IL18 and CCL2. May act either independently of IL18R1, or in a complex with IL18R1. The protein is Solute carrier family 12 member 3 of Homo sapiens (Human).